The following is a 183-amino-acid chain: GMP synthase [glutamine-hydrolyzing] subunit A (183 aa).

A Glutamine amidotransferase type-1 domain is found at 2–183 (KIYVIYNYGQ…YRNFIEICKK (182 aa)). Cys-74 (nucleophile) is an active-site residue. Residues His-161 and Glu-163 contribute to the active site.

As to quaternary structure, heterodimer composed of a glutamine amidotransferase subunit (A) and a GMP-binding subunit (B).

It catalyses the reaction XMP + L-glutamine + ATP + H2O = GMP + L-glutamate + AMP + diphosphate + 2 H(+). It participates in purine metabolism; GMP biosynthesis; GMP from XMP (L-Gln route): step 1/1. Functionally, catalyzes the synthesis of GMP from XMP. In Archaeoglobus fulgidus (strain ATCC 49558 / DSM 4304 / JCM 9628 / NBRC 100126 / VC-16), this protein is GMP synthase [glutamine-hydrolyzing] subunit A.